A 316-amino-acid polypeptide reads, in one-letter code: Aspartate carbamoyltransferase catalytic subunit (316 aa).

Positions 66 and 67 each coordinate carbamoyl phosphate. Lysine 94 provides a ligand contact to L-aspartate. Carbamoyl phosphate contacts are provided by arginine 116, histidine 146, and glutamine 149. Arginine 180 and arginine 235 together coordinate L-aspartate. Positions 276 and 277 each coordinate carbamoyl phosphate.

This sequence belongs to the aspartate/ornithine carbamoyltransferase superfamily. ATCase family. Heterododecamer (2C3:3R2) of six catalytic PyrB chains organized as two trimers (C3), and six regulatory PyrI chains organized as three dimers (R2).

The catalysed reaction is carbamoyl phosphate + L-aspartate = N-carbamoyl-L-aspartate + phosphate + H(+). The protein operates within pyrimidine metabolism; UMP biosynthesis via de novo pathway; (S)-dihydroorotate from bicarbonate: step 2/3. In terms of biological role, catalyzes the condensation of carbamoyl phosphate and aspartate to form carbamoyl aspartate and inorganic phosphate, the committed step in the de novo pyrimidine nucleotide biosynthesis pathway. This Stenotrophomonas maltophilia (strain R551-3) protein is Aspartate carbamoyltransferase catalytic subunit.